We begin with the raw amino-acid sequence, 342 residues long: Selenide, water dikinase (342 aa).

The active site involves cysteine 13. Residues lysine 16 and 44–46 (SCD) contribute to the ATP site. Mg(2+) is bound at residue aspartate 47. ATP is bound by residues aspartate 64, aspartate 87, and 134–136 (GHS). Residue aspartate 87 participates in Mg(2+) binding. Residue aspartate 222 coordinates Mg(2+).

The protein belongs to the selenophosphate synthase 1 family. Class I subfamily. Homodimer. Requires Mg(2+) as cofactor.

The enzyme catalyses hydrogenselenide + ATP + H2O = selenophosphate + AMP + phosphate + 2 H(+). In terms of biological role, synthesizes selenophosphate from selenide and ATP. The polypeptide is Selenide, water dikinase (Agathobacter rectalis (strain ATCC 33656 / DSM 3377 / JCM 17463 / KCTC 5835 / VPI 0990) (Eubacterium rectale)).